We begin with the raw amino-acid sequence, 192 residues long: Acireductone dioxygenase 2 (192 aa).

Residues histidine 99, histidine 101, glutamate 105, and histidine 144 each contribute to the Fe(2+) site. The Ni(2+) site is built by histidine 99, histidine 101, glutamate 105, and histidine 144.

The protein belongs to the acireductone dioxygenase (ARD) family. The cofactor is Fe(2+). It depends on Ni(2+) as a cofactor.

Its subcellular location is the cytoplasm. It is found in the nucleus. The enzyme catalyses 1,2-dihydroxy-5-(methylsulfanyl)pent-1-en-3-one + O2 = 4-methylsulfanyl-2-oxobutanoate + formate + 2 H(+). It catalyses the reaction 1,2-dihydroxy-5-(methylsulfanyl)pent-1-en-3-one + O2 = 3-(methylsulfanyl)propanoate + CO + formate + 2 H(+). It functions in the pathway amino-acid biosynthesis; L-methionine biosynthesis via salvage pathway; L-methionine from S-methyl-5-thio-alpha-D-ribose 1-phosphate: step 5/6. Functionally, catalyzes 2 different reactions between oxygen and the acireductone 1,2-dihydroxy-3-keto-5-methylthiopentene (DHK-MTPene) depending upon the metal bound in the active site. Fe-containing acireductone dioxygenase (Fe-ARD) produces formate and 2-keto-4-methylthiobutyrate (KMTB), the alpha-ketoacid precursor of methionine in the methionine recycle pathway. Ni-containing acireductone dioxygenase (Ni-ARD) produces methylthiopropionate, carbon monoxide and formate, and does not lie on the methionine recycle pathway. This is Acireductone dioxygenase 2 (ARD2) from Arabidopsis thaliana (Mouse-ear cress).